The chain runs to 87 residues: Toxin Cll5b (87 aa).

The N-terminal stretch at 1-19 (MNSLLMITACLAEIGTVWA) is a signal peptide. The 66-residue stretch at 20 to 85 (KEGYLVNKST…TYPLPNKSCS (66 aa)) folds into the LCN-type CS-alpha/beta domain. Cystine bridges form between cysteine 31/cysteine 84, cysteine 35/cysteine 60, cysteine 44/cysteine 65, and cysteine 48/cysteine 67. Residues 86-87 (KK) constitute a propeptide, removed by a carboxypeptidase.

The protein belongs to the long (4 C-C) scorpion toxin superfamily. Sodium channel inhibitor family. Beta subfamily. Expressed by the venom gland.

It is found in the secreted. Its function is as follows. Beta toxins bind voltage-independently at site-4 of sodium channels (Nav) and shift the voltage of activation toward more negative potentials thereby affecting sodium channel activation and promoting spontaneous and repetitive firing. This chain is Toxin Cll5b, found in Centruroides limpidus (Mexican scorpion).